The chain runs to 306 residues: Deoxyribokinase (306 aa).

Substrate is bound by residues 10–12 (MVD), 38–42 (GKGAN), and glutamate 139. ATP-binding positions include asparagine 184 and 220–225 (TMGEKG). 2 residues coordinate K(+): aspartate 246 and serine 248. 251-252 (GD) is a binding site for ATP. Aspartate 252 is a substrate binding site. Aspartate 252 (proton acceptor) is an active-site residue. Residues serine 282, glycine 285, glycine 287, and serine 291 each contribute to the K(+) site.

The protein belongs to the carbohydrate kinase PfkB family. Deoxyribokinase subfamily. Homodimer. It depends on Mg(2+) as a cofactor.

It localises to the cytoplasm. It carries out the reaction 2-deoxy-D-ribose + ATP = 2-deoxy-D-ribose 5-phosphate + ADP + H(+). Functionally, catalyzes the ATP-dependent phosphorylation of 2-deoxy-D-ribose to 2-deoxy-D-ribose 5-phosphate (dRib-5P), allowing the use of deoxyribose as the sole carbon source. Can also use D-ribose, with much lower efficiency. The sequence is that of Deoxyribokinase from Salmonella typhi.